Reading from the N-terminus, the 327-residue chain is Phenylalanine--tRNA ligase alpha subunit (327 aa).

E252 is a binding site for Mg(2+).

Belongs to the class-II aminoacyl-tRNA synthetase family. Phe-tRNA synthetase alpha subunit type 1 subfamily. In terms of assembly, tetramer of two alpha and two beta subunits. It depends on Mg(2+) as a cofactor.

The protein resides in the cytoplasm. It carries out the reaction tRNA(Phe) + L-phenylalanine + ATP = L-phenylalanyl-tRNA(Phe) + AMP + diphosphate + H(+). This chain is Phenylalanine--tRNA ligase alpha subunit, found in Yersinia pseudotuberculosis serotype O:1b (strain IP 31758).